The primary structure comprises 192 residues: Vascular endothelial growth factor A (192 aa).

Positions 1-26 (MNFLLTWIHWGLAALLYFHNAKVLQA) are cleaved as a signal peptide. 3 disulfide bridges follow: cysteine 52-cysteine 94, cysteine 83-cysteine 128, and cysteine 87-cysteine 130. Asparagine 101 carries N-linked (GlcNAc...) asparagine glycosylation.

This sequence belongs to the PDGF/VEGF growth factor family. Homodimer; disulfide-linked. Also found as heterodimer with PGF. Interacts with FLT1/VEGFR1 and KDR/VEGFR2 receptors, heparan sulfate and heparin. Expressed by the venom gland, and probably other tissues.

The protein localises to the secreted. Its function is as follows. Growth factor active in angiogenesis, vasculogenesis and endothelial cell growth. Induces endothelial cell proliferation, promotes cell migration, inhibits apoptosis and induces permeabilization of blood vessels. The chain is Vascular endothelial growth factor A from Agkistrodon piscivorus piscivorus (Eastern cottonmouth).